We begin with the raw amino-acid sequence, 199 residues long: Large ribosomal subunit protein bL25 (199 aa).

Belongs to the bacterial ribosomal protein bL25 family. CTC subfamily. As to quaternary structure, part of the 50S ribosomal subunit; part of the 5S rRNA/L5/L18/L25 subcomplex. Contacts the 5S rRNA. Binds to the 5S rRNA independently of L5 and L18.

In terms of biological role, this is one of the proteins that binds to the 5S RNA in the ribosome where it forms part of the central protuberance. The sequence is that of Large ribosomal subunit protein bL25 from Syntrophobacter fumaroxidans (strain DSM 10017 / MPOB).